The chain runs to 519 residues: 2,3-bisphosphoglycerate-independent phosphoglycerate mutase (519 aa).

2 residues coordinate Mn(2+): D18 and S68. S68 serves as the catalytic Phosphoserine intermediate. Residues H129, 159–160 (RD), R191, R197, 267–270 (RADR), and K341 each bind substrate. Positions 408, 412, 449, 450, and 468 each coordinate Mn(2+).

This sequence belongs to the BPG-independent phosphoglycerate mutase family. Monomer. The cofactor is Mn(2+).

It catalyses the reaction (2R)-2-phosphoglycerate = (2R)-3-phosphoglycerate. Its pathway is carbohydrate degradation; glycolysis; pyruvate from D-glyceraldehyde 3-phosphate: step 3/5. Catalyzes the interconversion of 2-phosphoglycerate and 3-phosphoglycerate. The sequence is that of 2,3-bisphosphoglycerate-independent phosphoglycerate mutase from Coxiella burnetii (strain Dugway 5J108-111).